We begin with the raw amino-acid sequence, 234 residues long: Adenosine 5'-phosphosulfate reductase (234 aa).

[4Fe-4S] cluster-binding residues include cysteine 120, cysteine 121, cysteine 203, and cysteine 206. Cysteine 229 serves as the catalytic Nucleophile; cysteine thiosulfonate intermediate.

This sequence belongs to the PAPS reductase family. CysH subfamily. The cofactor is [4Fe-4S] cluster.

It localises to the cytoplasm. The enzyme catalyses [thioredoxin]-disulfide + sulfite + AMP + 2 H(+) = adenosine 5'-phosphosulfate + [thioredoxin]-dithiol. It functions in the pathway sulfur metabolism; hydrogen sulfide biosynthesis; sulfite from sulfate. Functionally, catalyzes the formation of sulfite from adenosine 5'-phosphosulfate (APS) using thioredoxin as an electron donor. This is Adenosine 5'-phosphosulfate reductase from Bacillus cereus (strain B4264).